The primary structure comprises 82 residues: MAEQCPPKRVVGAKQTLKAVLNCKVAQVYIAKDAEEHVVKKIKEACEEKGIKIVYIDTMKELGRMCGIDVGAATAADVIGER.

Belongs to the eukaryotic ribosomal protein eL8 family.

The sequence is that of RNA-binding protein TTE2299 from Caldanaerobacter subterraneus subsp. tengcongensis (strain DSM 15242 / JCM 11007 / NBRC 100824 / MB4) (Thermoanaerobacter tengcongensis).